The sequence spans 827 residues: Polyhomeotic-like protein 2 (827 aa).

3 disordered regions span residues 1–78 (MEKE…QYLQ), 282–316 (GLGA…SDLT), and 482–545 (QEPT…PPQA). Over residues 9–38 (SVASSASVTIPSTTSVSTSTSAGTLSNSSS) the composition is skewed to low complexity. Residues 485 to 498 (TRTELRQSDKESQV) show a composition bias toward basic and acidic residues. Residues 517–538 (AMTSGSGNNAPTVTGSAPQNGE) show a composition bias toward polar residues. The HD1 motif lies at 540–570 (KPPPQAVVKPQILTHVIEGFVIQEGAEPFPV). The FCS-type zinc-finger motif lies at 609-643 (NNQPEPVRTCEFCGNVDFAFNFKRSKRFCSTVCAK). The Zn(2+) site is built by Cys-618, Cys-621, Cys-637, and Cys-641. The interval 653–730 (MGLFPGKSSP…EPISPLSNSS (78 aa)) is disordered. Basic and acidic residues predominate over residues 661-675 (SPEDTKKPKASDESP). Polar residues-rich tracts occupy residues 687-696 (PSIQTTTGAS) and 708-717 (GESSQCSDMS). An SAM domain is found at 763–827 (WNVEDVYEFI…FARISMLKDS (65 aa)).

Component of a PRC1-like complex. As to expression, isoform 1 expression is stronger at the posterior border than in the anterior region within individual somites; On the contrary, isoform 2 expression is higher at the posterior border.

The protein localises to the nucleus. Its function is as follows. Component of a Polycomb group (PcG) multiprotein PRC1-like complex, a complex class required to maintain the transcriptionally repressive state of many genes, including Hox genes, throughout development. PcG PRC1 complex acts via chromatin remodeling and modification of histones; it mediates monoubiquitination of histone H2A 'Lys-119', rendering chromatin heritably changed in its expressibility. The polypeptide is Polyhomeotic-like protein 2 (phc2) (Danio rerio (Zebrafish)).